An 83-amino-acid polypeptide reads, in one-letter code: Early lactation protein (83 aa).

N14, N31, and N42 each carry an N-linked (GlcNAc...) asparagine glycan. Positions C23–C73 constitute a BPTI/Kunitz inhibitor domain. Intrachain disulfides connect C23/C73, C32/C56, and C48/C69.

In terms of processing, N-glycosylated. In terms of tissue distribution, found in the whey fraction of milk.

It localises to the secreted. This chain is Early lactation protein (ELP), found in Notamacropus eugenii (Tammar wallaby).